Reading from the N-terminus, the 93-residue chain is Small ribosomal subunit protein bS18 (93 aa).

The protein belongs to the bacterial ribosomal protein bS18 family. In terms of assembly, part of the 30S ribosomal subunit. Forms a tight heterodimer with protein bS6.

Its function is as follows. Binds as a heterodimer with protein bS6 to the central domain of the 16S rRNA, where it helps stabilize the platform of the 30S subunit. This chain is Small ribosomal subunit protein bS18, found in Paracidovorax citrulli (strain AAC00-1) (Acidovorax citrulli).